We begin with the raw amino-acid sequence, 1102 residues long: Coiled-coil domain-containing protein AGAP005037 (1102 aa).

The span at 1 to 11 (MLIRWKSKDKS) shows a compositional bias: basic and acidic residues. 2 disordered regions span residues 1 to 69 (MLIR…HTLG) and 295 to 318 (HKSK…RGMY). A compositionally biased stretch (low complexity) spans 12-21 (SSSTSSSSST). A compositionally biased stretch (basic and acidic residues) spans 50 to 65 (IDDRRRSARSREDPRR). Residues 405 to 430 (HRIRVEHMERQLANLTGLVQKALTQN) adopt a coiled-coil conformation. Disordered stretches follow at residues 450–475 (RNAE…STCH) and 489–539 (DIQG…PLVM). 2 coiled-coil regions span residues 554–579 (EVYN…LRRL) and 614–654 (DKER…EVIN). Disordered regions lie at residues 745–774 (LPIP…PSPR), 832–958 (TKIS…CSDN), and 1031–1087 (LCGG…TLPP). Polar residues predominate over residues 832–849 (TKISQSQLYPSEPVSSNV). Residues 867 to 881 (PPQPTRPTTGKPPVP) show a composition bias toward pro residues. Residues 904–918 (TSSRSPLASPTSPHV) are compositionally biased toward low complexity. Over residues 936-958 (DCEQQQRTSEGTDSGSESVCSDN) the composition is skewed to polar residues.

The protein is Coiled-coil domain-containing protein AGAP005037 of Anopheles gambiae (African malaria mosquito).